Consider the following 258-residue polypeptide: Imidazole glycerol phosphate synthase subunit HisF (258 aa).

Active-site residues include Asp12 and Asp131.

Belongs to the HisA/HisF family. As to quaternary structure, heterodimer of HisH and HisF.

Its subcellular location is the cytoplasm. The enzyme catalyses 5-[(5-phospho-1-deoxy-D-ribulos-1-ylimino)methylamino]-1-(5-phospho-beta-D-ribosyl)imidazole-4-carboxamide + L-glutamine = D-erythro-1-(imidazol-4-yl)glycerol 3-phosphate + 5-amino-1-(5-phospho-beta-D-ribosyl)imidazole-4-carboxamide + L-glutamate + H(+). It participates in amino-acid biosynthesis; L-histidine biosynthesis; L-histidine from 5-phospho-alpha-D-ribose 1-diphosphate: step 5/9. Functionally, IGPS catalyzes the conversion of PRFAR and glutamine to IGP, AICAR and glutamate. The HisF subunit catalyzes the cyclization activity that produces IGP and AICAR from PRFAR using the ammonia provided by the HisH subunit. This chain is Imidazole glycerol phosphate synthase subunit HisF, found in Sinorhizobium fredii (strain NBRC 101917 / NGR234).